We begin with the raw amino-acid sequence, 327 residues long: F-box/LRR-repeat protein At3g58900 (327 aa).

An F-box domain is found at 1 to 47 (MDLFSSLPNELLYHILSFLSTKEAALTSVLSKRWRNLFAFVPYLEFD). LRR repeat units follow at residues 116-144 (DLFI…RVGS), 161-192 (KTLV…DMTN), 199-230 (NVTV…SFDA), 235-261 (YFYY…QINL), and 277-308 (EMLV…YLSP).

This is F-box/LRR-repeat protein At3g58900 from Arabidopsis thaliana (Mouse-ear cress).